The primary structure comprises 631 residues: MGKKHKKYRPEWRAVEGDYEDKPLEKPLKLVLKVGGSEVTELSGSGHDSSYYDDRSDHEWERHKEKKKKKKKKSEKEKYADDDERRRRKEEKKKKREREQSETASTAPVEPFTLPKPVEVVVEEKKRKRDKFESESEADEFHPAVKVEVEQPADRPVRACRTQQENEATPHQQLLEHFLRLLQRKDAHGFFAFPVTDAIAPGYSMIIKHPMDFSTMKDKIAANEYKTITEFKADFKLMCDNAMVYNRPETVYYKAAKKLLHTGFKMMSKQAAILGDDDIAPEEPVTEMMPIHTEYPKKSKKQPVKEPIISDMYELEGNACSLTDSTAEEHVLALVEHAADEARDRINRFMPNSKIGYLKKDTEGSLMYVVVNQDPEGEEEETHPVDLSSLANKLIPGLTSLGFKDDRRHKVTFLSSAYNTQTLQNNSIYPDLHPEEMDMLYSAYGDETGVQCALSLQEFVKGCGGFTKRLVDDLLDKMTAGDHSKAVVQIRQKRNLPIDEAKSSLCDMPGTDGGGMEAGSVLDFMSMKSYPDMSLDMLNTLGKCVKKEPEHEDGHQHFDDPTKLLQEFQDASVDRVGSRPSSNLSSLSNASERDQHHLGSSPHLGVGDQAEMVQDPYEFLQSPEPGSTANS.

Disordered regions lie at residues 1–26 and 39–116; these read MGKKHKKYRPEWRAVEGDYEDKPLEK and VTEL…TLPK. Composition is skewed to basic and acidic residues over residues 9-26 and 50-63; these read RPEWRAVEGDYEDKPLEK and SYYDDRSDHEWERH. The segment covering 64-73 has biased composition (basic residues); it reads KEKKKKKKKK. The span at 74–85 shows a compositional bias: basic and acidic residues; sequence SEKEKYADDDER. Positions 86-96 are enriched in basic residues; it reads RRRKEEKKKKR. The 105-residue stretch at 166 to 270 folds into the Bromo domain; sequence NEATPHQQLL…HTGFKMMSKQ (105 aa). The interval 244–246 is histone H4K5ac H4K8ac and histone H4K5bu H4K8bu binding; sequence VYN. The tract at residues 571-631 is disordered; sequence ASVDRVGSRP…SPEPGSTANS (61 aa). Over residues 581–590 the composition is skewed to low complexity; sequence SSNLSSLSNA.

Binds acetylated histones H3 and H4. Binds butyrylated histone H4.

The protein resides in the nucleus. Functionally, plays a role in chromatin remodeling and regulation of transcription. Acts as a chromatin reader that recognizes and binds acylated histones: binds histones that are acetylated and/or butyrylated. This is Bromodomain-containing protein 9 (brd9) from Danio rerio (Zebrafish).